The chain runs to 161 residues: 18.1 kDa class I heat shock protein (161 aa).

The region spanning 47-161 (ETAAFAGARI…PDVKSIQVTG (115 aa)) is the sHSP domain.

The protein belongs to the small heat shock protein (HSP20) family. As to quaternary structure, may form oligomeric structures.

It is found in the cytoplasm. The sequence is that of 18.1 kDa class I heat shock protein (HSP18.1) from Oryza sativa subsp. japonica (Rice).